A 287-amino-acid chain; its full sequence is MIPGHRGPWSAPLCRRLVPAGHSGMGLSPAASGEYGIRLFRVPWPSRPKQISRTASTESSDTQPTNDSASSQALVVQFLPKLPKQDRGLEQARSLRQGQKPEINLELIPSKKRTEMIPSSDSEIEGNLKNQAAESNQKPRPGDLIEIFRIGYEHWAIYVEDDCVVHLAPPSEFEAGSITSIFSNRAVVKYSRLQDVLHGCSWKINNKLDGTYLPLPVDKIIQRTKNMINKIVQYSLIEGNCEHFVNDLRYGVPRSQQVEHVLVEGAKAAGAVLSAVVDSIRPKPITA.

Disordered stretches follow at residues 48 to 72 (PKQISRTASTESSDTQPTNDSASSQ) and 86 to 138 (DRGL…SNQK). Polar residues-rich tracts occupy residues 49 to 72 (KQISRTASTESSDTQPTNDSASSQ) and 128 to 138 (LKNQAAESNQK). An LRAT domain is found at 144–257 (LIEIFRIGYE…LRYGVPRSQQ (114 aa)). Catalysis depends on residues His154 and His166. Cys241 functions as the Acyl-thioester intermediate in the catalytic mechanism.

The protein belongs to the H-rev107 family. As to expression, expressed in testis.

It localises to the cytoplasm. The protein resides in the cytosol. The enzyme catalyses a 1,2-diacyl-sn-glycero-3-phosphocholine + H2O = a 1-acyl-sn-glycero-3-phosphocholine + a fatty acid + H(+). The catalysed reaction is a 1,2-diacyl-sn-glycero-3-phosphocholine + H2O = a 2-acyl-sn-glycero-3-phosphocholine + a fatty acid + H(+). It carries out the reaction 1-hexadecanoyl-2-(5Z,8Z,11Z,14Z-eicosatetraenoyl)-sn-glycero-3-phosphocholine + 1,2-di-(9Z-octadecenoyl)-sn-glycero-3-phosphoethanolamine = N-(5Z,8Z,11Z,14Z-eicosatetraenoyl)-1,2-di-(9Z-octadecenoyl)-sn-glycero-3-phosphoethanolamine + 1-hexadecanoyl-sn-glycero-3-phosphocholine + H(+). It catalyses the reaction 1,2-di-(9Z-octadecenoyl)-sn-glycero-3-phosphoethanolamine + 1,2-dihexadecanoyl-sn-glycero-3-phosphocholine = N-hexadecanoyl-1,2-di-(9Z-octadecenoyl)-sn-glycero-3-phosphoethanolamine + 1-hexadecanoyl-sn-glycero-3-phosphocholine + H(+). The enzyme catalyses 1,2-di-(9Z-octadecenoyl)-sn-glycero-3-phosphoethanolamine + 1,2-dihexadecanoyl-sn-glycero-3-phosphocholine = N-hexadecanoyl-1,2-di-(9Z-octadecenoyl)-sn-glycero-3-phosphoethanolamine + 2-hexadecanoyl-sn-glycero-3-phosphocholine + H(+). The catalysed reaction is a 1,2-diacyl-sn-glycero-3-phosphoethanolamine + a 1,2-diacyl-sn-glycero-3-phosphocholine = an N-acyl-1,2-diacyl-sn-glycero-3-phosphoethanolamine + a 1-acyl-sn-glycero-3-phosphocholine + H(+). It carries out the reaction a 1,2-diacyl-sn-glycero-3-phosphoethanolamine + a 1,2-diacyl-sn-glycero-3-phosphocholine = an N-acyl-1,2-diacyl-sn-glycero-3-phosphoethanolamine + a 2-acyl-sn-glycero-3-phosphocholine + H(+). It catalyses the reaction 1-hexadecanoyl-2-(9Z-octadecenoyl)-sn-glycero-3-phosphocholine + 1,2-di-(9Z-octadecenoyl)-sn-glycero-3-phosphoethanolamine = N,1,2-tri-(9Z-octadecenoyl)-sn-glycero-3-phosphoethanolamine + 1-hexadecanoyl-sn-glycero-3-phosphocholine + H(+). Functionally, exhibits both phospholipase A1/2 and acyltransferase activities. Shows phospholipase A1 (PLA1) and A2 (PLA2) activity, catalyzing the calcium-independent release of fatty acids from the sn-1 or sn-2 position of glycerophospholipids. Shows N-acyltransferase activity, catalyzing the calcium-independent transfer of a fatty acyl group at the sn-1 position of phosphatidylcholine (PC) and other glycerophospholipids to the primary amine of phosphatidylethanolamine (PE), forming N-acylphosphatidylethanolamine (NAPE), which serves as precursor for N-acylethanolamines (NAEs). The chain is Phospholipase A and acyltransferase 5 from Rattus norvegicus (Rat).